Consider the following 156-residue polypeptide: MSQLTHLDDSGAAHMVDVGGKPATERLARAGGTIRMSAEALAAIKAGDAPKGDVLGTARIAGIMAAKKTGELIPLCHPLALDAVDVAFEFGEREIAVTATASLTGKTGVEMEALTAASVALLTIYDMAKALDKGMVIEGLRLLEKRGGKSGHWIAK.

Residues 75–77 (LCH) and 111–112 (ME) each bind substrate. Residue D126 is part of the active site.

It belongs to the MoaC family. In terms of assembly, homohexamer; trimer of dimers.

It carries out the reaction (8S)-3',8-cyclo-7,8-dihydroguanosine 5'-triphosphate = cyclic pyranopterin phosphate + diphosphate. It functions in the pathway cofactor biosynthesis; molybdopterin biosynthesis. Its function is as follows. Catalyzes the conversion of (8S)-3',8-cyclo-7,8-dihydroguanosine 5'-triphosphate to cyclic pyranopterin monophosphate (cPMP). This is Cyclic pyranopterin monophosphate synthase from Erythrobacter litoralis (strain HTCC2594).